The following is a 449-amino-acid chain: Myb-related protein Pp1 (449 aa).

One can recognise an HTH myb-type domain in the interval 1 to 30 (LGNRWSAIAIPRRTDNEIKNYWNTHLKKRL). The H-T-H motif DNA-binding region spans 5–26 (WSAIAIPRRTDNEIKNYWNTHL).

It is found in the nucleus. Functionally, possible transcription activator. In Physcomitrium patens (Spreading-leaved earth moss), this protein is Myb-related protein Pp1 (PP1).